The chain runs to 296 residues: Cation-efflux pump FieF (296 aa).

The Cytoplasmic portion of the chain corresponds to 1-18; sequence MTQTSQYDFWVKLASRAS. The chain crosses the membrane as a helical span at residues 19–32; it reads VATALTLITIKLLA. The Periplasmic portion of the chain corresponds to 33–43; the sequence is WLYSGSASMLA. A helical membrane pass occupies residues 44–60; it reads SLTDSFADTLASIINFI. Zn(2+) contacts are provided by aspartate 47, aspartate 51, aspartate 70, histidine 73, and histidine 77. Residues 61–83 are Cytoplasmic-facing; the sequence is AIRYAIVPADHDHRYGHGKAEPL. The chain crosses the membrane as a helical span at residues 84–105; it reads AALAQSAFIMGSAFLLLFYGGE. Residues 106-119 are Periplasmic-facing; it reads RLLNPSPVENATLG. Residues 120–138 traverse the membrane as a helical segment; the sequence is VVVSVVAIVLTLALVLLQK. Over 139–145 the chain is Cytoplasmic; it reads RALAATN. The helical transmembrane segment at 146–160 threads the bilayer; it reads STVVEADSLHYKSDL. The Zn(2+) site is built by histidine 155 and aspartate 159. Residues 161-180 lie on the Periplasmic side of the membrane; that stretch reads FLNAAVLLALVLSQYGWWWA. Residues 181–200 traverse the membrane as a helical segment; the sequence is DGLFAVLIACYIGQQAFDLG. Over 201–296 the chain is Cytoplasmic; that stretch reads YRSIQALLDR…DPVQVEPTTQ (96 aa). Residues histidine 234, aspartate 235, histidine 250, histidine 263, histidine 285, and aspartate 287 each contribute to the Zn(2+) site.

The protein belongs to the cation diffusion facilitator (CDF) transporter (TC 2.A.4) family. FieF subfamily. Homodimer. The subunits are held together in a parallel orientation through zinc binding at the interface of the cytoplasmic domains.

Its subcellular location is the cell inner membrane. It catalyses the reaction Zn(2+)(in) + H(+)(out) = Zn(2+)(out) + H(+)(in). The catalysed reaction is Cd(2+)(in) + H(+)(out) = Cd(2+)(out) + H(+)(in). The enzyme catalyses Fe(2+)(in) + H(+)(out) = Fe(2+)(out) + H(+)(in). Its activity is regulated as follows. Cytoplasmic zinc binding may trigger movements of two electrically repulsive cytoplasmic domains and reorient transmembrane helices, thereby modulating coordination geometry of the active site for zinc transport. It may modulate activity in response to cytoplasmic metal fluctuations. Divalent metal cation transporter which exports Zn(2+), Cd(2+) and possibly Fe(2+). Zn(2+)/H(+) antiporter capable of using the proton motive force to remove Zn(2+) from the cytoplasm. May be involved in zinc and iron detoxification by efflux. In Shewanella oneidensis (strain ATCC 700550 / JCM 31522 / CIP 106686 / LMG 19005 / NCIMB 14063 / MR-1), this protein is Cation-efflux pump FieF.